The following is a 623-amino-acid chain: Glutathione import ATP-binding protein GsiA (623 aa).

ABC transporter domains lie at valine 15–leucine 269 and leucine 314–leucine 564. ATP is bound by residues glycine 49–serine 56 and glycine 357–serine 364.

The protein belongs to the ABC transporter superfamily. Glutathione importer (TC 3.A.1.5.11) family. In terms of assembly, the complex is composed of two ATP-binding proteins (GsiA), two transmembrane proteins (GsiC and GsiD) and a solute-binding protein (GsiB).

The protein resides in the cell inner membrane. It carries out the reaction glutathione(out) + ATP + H2O = glutathione(in) + ADP + phosphate + H(+). Part of the ABC transporter complex GsiABCD involved in glutathione import. Responsible for energy coupling to the transport system. The polypeptide is Glutathione import ATP-binding protein GsiA (Shigella dysenteriae serotype 1 (strain Sd197)).